A 565-amino-acid chain; its full sequence is Sulfite reductase [NADPH] hemoprotein beta-component (565 aa).

[4Fe-4S] cluster-binding residues include C429, C435, C474, and C478. C478 is a siroheme binding site.

This sequence belongs to the nitrite and sulfite reductase 4Fe-4S domain family. Alpha(8)-beta(8). The alpha component is a flavoprotein, the beta component is a hemoprotein. The cofactor is siroheme. [4Fe-4S] cluster serves as cofactor.

It carries out the reaction hydrogen sulfide + 3 NADP(+) + 3 H2O = sulfite + 3 NADPH + 4 H(+). The protein operates within sulfur metabolism; hydrogen sulfide biosynthesis; hydrogen sulfide from sulfite (NADPH route): step 1/1. Its function is as follows. Component of the sulfite reductase complex that catalyzes the 6-electron reduction of sulfite to sulfide. This is one of several activities required for the biosynthesis of L-cysteine from sulfate. This Shewanella sp. (strain MR-7) protein is Sulfite reductase [NADPH] hemoprotein beta-component.